Reading from the N-terminus, the 202-residue chain is ER membrane protein complex subunit 7 homolog (202 aa).

The N-terminal stretch at 1–23 (MAPIFRSTSLIAFSLFFFFFAST) is a signal peptide. The chain crosses the membrane as a helical span at residues 148–168 (IVKSPMGLMVGFMVVVVFLMP). The segment at 179 to 202 (MKSAQEQMRSQGVPSLTSLLPASR) is disordered. Residues 182-202 (AQEQMRSQGVPSLTSLLPASR) are compositionally biased toward polar residues.

The protein belongs to the EMC7 family.

The protein localises to the membrane. In Arabidopsis thaliana (Mouse-ear cress), this protein is ER membrane protein complex subunit 7 homolog.